A 1405-amino-acid polypeptide reads, in one-letter code: Centlein (1405 aa).

Pro residues predominate over residues 1–14; sequence MAARSPPSPHPSPP. The interval 1–79 is disordered; it reads MAARSPPSPH…GGAAPAHAPL (79 aa). N-acetylalanine is present on alanine 2. A phosphoserine mark is found at serine 5 and serine 22. Positions 48–58 are enriched in basic and acidic residues; sequence VVADESDKIWV. Over residues 61–71 the composition is skewed to gly residues; it reads EGSGGRRGPGG. Residues 95-126 are a coiled coil; it reads EEAMVTRTQLLEEELSSLKEELALCQADKEFV. Disordered regions lie at residues 421–450 and 493–529; these read KLKE…QVPH and SRKS…EELQ. Coiled coils occupy residues 613–655 and 681–793; these read NELA…ELNR and KNGK…ELIN. The tract at residues 865–917 is disordered; that stretch reads WEDVSESSSDSEAQTSQTLGTIIVETSQKISPTEDGKDQKESDPTEDSQTQGK. Residues 877–895 are compositionally biased toward polar residues; it reads AQTSQTLGTIIVETSQKIS. The span at 896-907 shows a compositional bias: basic and acidic residues; it reads PTEDGKDQKESD. The stretch at 980-1311 forms a coiled coil; it reads NIILLRERII…IRELKKMKKN (332 aa). Threonine 1343 is subject to Phosphothreonine.

As to quaternary structure, interacts with CEP250 and CEP68. Interacts with NEK2; the interaction leads to phosphorylation of CNTLN. In terms of processing, phosphorylated directly or indirectly by NEK2.

Its subcellular location is the cytoplasm. It localises to the cytoskeleton. The protein resides in the microtubule organizing center. The protein localises to the centrosome. It is found in the centriole. Functionally, required for centrosome cohesion and recruitment of CEP68 to centrosomes. This Homo sapiens (Human) protein is Centlein (CNTLN).